Reading from the N-terminus, the 326-residue chain is 5-dehydro-2-deoxygluconokinase (326 aa).

Belongs to the carbohydrate kinase PfkB family.

It catalyses the reaction 5-dehydro-2-deoxy-D-gluconate + ATP = 6-phospho-5-dehydro-2-deoxy-D-gluconate + ADP + H(+). The protein operates within polyol metabolism; myo-inositol degradation into acetyl-CoA; acetyl-CoA from myo-inositol: step 5/7. In terms of biological role, catalyzes the phosphorylation of 5-dehydro-2-deoxy-D-gluconate (2-deoxy-5-keto-D-gluconate or DKG) to 6-phospho-5-dehydro-2-deoxy-D-gluconate (DKGP). In Shouchella clausii (strain KSM-K16) (Alkalihalobacillus clausii), this protein is 5-dehydro-2-deoxygluconokinase.